The chain runs to 545 residues: Lysine--tRNA ligase (545 aa).

Positions 42-50 (PSGVPHIGH) match the 'HIGH' region motif. The 'KMSKS' region signature appears at 307-311 (PLSSS).

This sequence belongs to the class-I aminoacyl-tRNA synthetase family.

The protein localises to the cytoplasm. The enzyme catalyses tRNA(Lys) + L-lysine + ATP = L-lysyl-tRNA(Lys) + AMP + diphosphate. This is Lysine--tRNA ligase from Haloarcula marismortui (strain ATCC 43049 / DSM 3752 / JCM 8966 / VKM B-1809) (Halobacterium marismortui).